The sequence spans 42 residues: Photosystem I reaction center subunit IX (42 aa).

Residues 7–27 (YLSAAPVLSTLWLGALAGLLI) traverse the membrane as a helical segment.

It belongs to the PsaJ family.

It localises to the plastid membrane. May help in the organization of the PsaE and PsaF subunits. The sequence is that of Photosystem I reaction center subunit IX from Cuscuta exaltata (Tall dodder).